The sequence spans 802 residues: Probable inactive leucine-rich repeat receptor-like protein kinase At3g03770 (802 aa).

The N-terminal stretch at 1 to 26 is a signal peptide; it reads MEKLYCGMPLLLLVLLLASIDGSTQL. Over 27–391 the chain is Extracellular; the sequence is QSSQSQTLLR…RNKVSKVGIA (365 aa). N-linked (GlcNAc...) asparagine glycans are attached at residues N52 and N83. 11 LRR repeats span residues 71 to 94, 104 to 128, 129 to 152, 153 to 176, 177 to 200, 201 to 225, 227 to 244, 245 to 268, 269 to 293, 294 to 317, and 319 to 341; these read EDSVTQLHIIGDNGTHMLPKSFSI, LPDVKVLTFVSLGLWGWLPQKINRL, SSLEILNVSSNFLFGPIPHELSSL, ATLQTLILDENMFSGELPDWIDSL, PSLAVLSLRKNVLNGSLPSSLSSL, SGLRVLALANNRFNGALPDLSHLTN, QVLDLEGNSFGPLFPRLS, NKLVTLILSKNKFRSAVSAEEVSS, LYQLQHLDLSYNTFVGPFPTSLMSL, PAITYLNISHNKLTGRLSANLSCN, and QLMFVDMSSNLLTGSLPTCLKPS. N135 carries N-linked (GlcNAc...) asparagine glycosylation. A glycan (N-linked (GlcNAc...) asparagine) is linked at N190. Residues N300 and N313 are each glycosylated (N-linked (GlcNAc...) asparagine). Residues 392–412 form a helical membrane-spanning segment; that stretch reads LGVTASILGVLLLAGALFVVL. Topologically, residues 413–802 are cytoplasmic; sequence RRLNAKKTVT…RDSGCEEHER (390 aa). The Protein kinase domain maps to 477–759; it reads FESSAFMGEG…FASQVQEGWL (283 aa). Residues 761-802 form a disordered region; the sequence is NSNPSSNLGSPSPAASSLPPPSRLHVTTLESPRDSGCEEHER. Residues 762 to 777 show a composition bias toward low complexity; the sequence is SNPSSNLGSPSPAASS. The segment covering 791–802 has biased composition (basic and acidic residues); sequence SPRDSGCEEHER.

It belongs to the protein kinase superfamily. Ser/Thr protein kinase family.

The protein resides in the cell membrane. This is Probable inactive leucine-rich repeat receptor-like protein kinase At3g03770 from Arabidopsis thaliana (Mouse-ear cress).